Here is a 145-residue protein sequence, read N- to C-terminus: D-aminoacyl-tRNA deacylase (145 aa).

The Gly-cisPro motif, important for rejection of L-amino acids motif lies at 137–138; that stretch reads GP.

This sequence belongs to the DTD family. As to quaternary structure, homodimer.

Its subcellular location is the cytoplasm. The enzyme catalyses glycyl-tRNA(Ala) + H2O = tRNA(Ala) + glycine + H(+). It carries out the reaction a D-aminoacyl-tRNA + H2O = a tRNA + a D-alpha-amino acid + H(+). Its function is as follows. An aminoacyl-tRNA editing enzyme that deacylates mischarged D-aminoacyl-tRNAs. Also deacylates mischarged glycyl-tRNA(Ala), protecting cells against glycine mischarging by AlaRS. Acts via tRNA-based rather than protein-based catalysis; rejects L-amino acids rather than detecting D-amino acids in the active site. By recycling D-aminoacyl-tRNA to D-amino acids and free tRNA molecules, this enzyme counteracts the toxicity associated with the formation of D-aminoacyl-tRNA entities in vivo and helps enforce protein L-homochirality. In Proteus mirabilis (strain HI4320), this protein is D-aminoacyl-tRNA deacylase.